Here is a 324-residue protein sequence, read N- to C-terminus: tRNA dimethylallyltransferase (324 aa).

17-24 (GPTASGKT) is a binding site for ATP. 19–24 (TASGKT) lines the substrate pocket. 4 interaction with substrate tRNA regions span residues 42–45 (DSAL), 166–170 (QRIQR), 251–256 (RCVGYR), and 284–291 (KRQITWLR).

Belongs to the IPP transferase family. As to quaternary structure, monomer. Requires Mg(2+) as cofactor.

It carries out the reaction adenosine(37) in tRNA + dimethylallyl diphosphate = N(6)-dimethylallyladenosine(37) in tRNA + diphosphate. Catalyzes the transfer of a dimethylallyl group onto the adenine at position 37 in tRNAs that read codons beginning with uridine, leading to the formation of N6-(dimethylallyl)adenosine (i(6)A). The sequence is that of tRNA dimethylallyltransferase from Burkholderia vietnamiensis (strain G4 / LMG 22486) (Burkholderia cepacia (strain R1808)).